Consider the following 478-residue polypeptide: MAPKRRGKKGKAKGNAVVDGVAPEDMSKEQVEEHVARIREELDREREERNYFQLERDKIHTFWEITRRQLEEKKAELRNKDREMEEAEERHQVEIKVYKQKVKHLLYEHQNNLAEVKTEGTVVMKLAQKEHRAQEGALRKDMRVLKVELKEQELANEVVIKNLRLKQAEEITKMRNDFERQVREIEAKYDKKMKMLRDELDLRRKTEIHEVEERKNGQISTLMQRHEEAFTDIKNYYNDITLNNLALINSLKEQMEDMRKKEEYLEREMAEVSLQNKRLAEPLQRAKEEMSEMQKRLGNHERDKQILACTKARLKVTEKELKDLKWEHEILEQRFIKVQQEREELYRKFTAAIQEVQQKTGFKNLVLERKLQALNAAVEKREVQFNEVLAASNLDPTALTLVSRKLEDVLESKNTTIKDLQYELARVCKAHNDLLRTYEAKLLAFGIPLDNVGFKPLETAVIGQTLGQGPAGLVGAPT.

Positions 1 to 12 (MAPKRRGKKGKA) are enriched in basic residues. Residues 1–32 (MAPKRRGKKGKAKGNAVVDGVAPEDMSKEQVE) form a disordered region. The interval 1 to 114 (MAPKRRGKKG…LLYEHQNNLA (114 aa)) is regulates microtubule-binding. Coiled coils occupy residues 24–201 (EDMS…DELD) and 243–427 (NNLA…LARV). A microtubule-binding region spans residues 115–258 (EVKTEGTVVM…NSLKEQMEDM (144 aa)). The interaction with SMO stretch occupies residues 357–478 (QQKTGFKNLV…GPAGLVGAPT (122 aa)).

It belongs to the DRC4 family. In terms of assembly, component of the nexin-dynein regulatory complex (N-DRC). Interacts with microtubules. Interacts with SMO. Interacts (via coiled-coil domains) with RAB3B (in GTP-bound form). Interacts with DRC1. Interacts with DRC7.

It is found in the cytoplasm. The protein localises to the cytoskeleton. Its subcellular location is the cell projection. The protein resides in the cilium. It localises to the flagellum. It is found in the cilium axoneme. The protein localises to the cilium basal body. Its subcellular location is the golgi apparatus. The protein resides in the flagellum axoneme. Its function is as follows. Component of the nexin-dynein regulatory complex (N-DRC), a key regulator of ciliary/flagellar motility which maintains the alignment and integrity of the distal axoneme and regulates microtubule sliding in motile axonemes. Plays an important role in the assembly of the N-DRC linker. Plays dual roles at both the primary (or non-motile) cilia to regulate hedgehog signaling and in motile cilia to coordinate cilia movement. Required for proper motile cilia functioning. Positively regulates ciliary smoothened (SMO)-dependent Hedgehog (Hh) signaling pathway by facilitating the trafficking of SMO into the cilium and the stimulation of SMO activity in a GRK2-dependent manner. The polypeptide is Dynein regulatory complex subunit 4 (Gas8) (Rattus norvegicus (Rat)).